Reading from the N-terminus, the 239-residue chain is Serine protease SplD (239 aa).

The first 36 residues, 1 to 36 (MNKNIIIKSIAALTILTSITGVGTTVVDGIQQTAKA), serve as a signal peptide directing secretion. Active-site charge relay system residues include histidine 75, aspartate 114, and serine 192.

This sequence belongs to the peptidase S1B family.

It is found in the secreted. The polypeptide is Serine protease SplD (splD) (Staphylococcus aureus (strain Mu3 / ATCC 700698)).